Consider the following 559-residue polypeptide: DNA ligase (559 aa).

Glutamate 247 contacts ATP. Catalysis depends on lysine 249, which acts as the N6-AMP-lysine intermediate. ATP contacts are provided by arginine 254, arginine 269, glutamate 299, phenylalanine 339, arginine 414, and lysine 420.

It belongs to the ATP-dependent DNA ligase family. Requires Mg(2+) as cofactor.

It carries out the reaction ATP + (deoxyribonucleotide)n-3'-hydroxyl + 5'-phospho-(deoxyribonucleotide)m = (deoxyribonucleotide)n+m + AMP + diphosphate.. Functionally, DNA ligase that seals nicks in double-stranded DNA during DNA replication, DNA recombination and DNA repair. In Pyrococcus abyssi (strain GE5 / Orsay), this protein is DNA ligase.